The sequence spans 784 residues: Alpha-catulin (784 aa).

The interval 35–247 (IKTKSIEQTL…LLLTASKTYL (213 aa)) is vinculin/alpha-catenin homology 1 (VH1) region. A coiled-coil region spans residues 387–414 (ASGLEVTVERLNRRLKDLSKQLQIVAME). The vinculin/alpha-catenin homology 2 (VH2) region stretch occupies residues 552–696 (PRPGKHGTTQ…MVKSPTVGKT (145 aa)). The interval 737–784 (GSVNGRTGADGERTSRESTVWRRTPSIRRAAPPTSSHLSANNSSSIHI) is disordered. Basic and acidic residues predominate over residues 745-756 (ADGERTSRESTV). Residues 771–784 (SSHLSANNSSSIHI) show a composition bias toward low complexity.

It belongs to the vinculin/alpha-catenin family. As to quaternary structure, interacts with slo-1 (via C-terminus); the interaction is required for localization of slo-1 to dense bodies in body wall muscle cells. Interacts (via N-terminus) with dystrophin complex member dyb-1 (via C-terminus); the interaction is required for localization of the dystrophin complex and ctn-1 near dense bodies in muscle cells. Expressed in body wall muscles, vulval muscles, stomatointestinal cells and pharyngeal muscle cells. Expressed in enteric muscles, nerve ring neurons and in the ventral nerve cord.

It is found in the cytoplasm. Functionally, required for slo-1 potassium ion channel clustering at presynaptic terminals and in egg-laying muscles; clustering of slo-1 mediates the intoxicating and sedatory effects of ethanol on worms. Required for slo-1 localization to dense bodies in body wall muscle cells. Maintains the localization of the dystrophin complex near muscle cell dense bodies via its interaction with complex member dyb-1 which is required for slo-1 localization in muscle while slo-1 localization in neurons is independent of the dystrophin complex. This chain is Alpha-catulin, found in Caenorhabditis elegans.